Here is a 512-residue protein sequence, read N- to C-terminus: tRNA-2-methylthio-N(6)-dimethylallyladenosine synthase (512 aa).

The disordered stretch occupies residues 1 to 20 (MLQQADGVSPDRSSCDTPAP). Residues 21 to 137 (RTFEVRTYGC…LPTLLDRARH (117 aa)) form the MTTase N-terminal domain. [4Fe-4S] cluster is bound by residues cysteine 30, cysteine 66, cysteine 100, cysteine 174, cysteine 178, and cysteine 181. One can recognise a Radical SAM core domain in the interval 160–397 (RESAYAAWVS…ELQERISWEE (238 aa)). A TRAM domain is found at 399-469 (RAQIGREVEL…PHHLIADAGP (71 aa)). The span at 470 to 486 (AEHRRTRAGDAHAEGRT) shows a compositional bias: basic and acidic residues. The disordered stretch occupies residues 470–512 (AEHRRTRAGDAHAEGRTPKTGVGLGMPGIGAPEPAPVTQGCAL).

The protein belongs to the methylthiotransferase family. MiaB subfamily. In terms of assembly, monomer. [4Fe-4S] cluster serves as cofactor.

The protein resides in the cytoplasm. The catalysed reaction is N(6)-dimethylallyladenosine(37) in tRNA + (sulfur carrier)-SH + AH2 + 2 S-adenosyl-L-methionine = 2-methylsulfanyl-N(6)-dimethylallyladenosine(37) in tRNA + (sulfur carrier)-H + 5'-deoxyadenosine + L-methionine + A + S-adenosyl-L-homocysteine + 2 H(+). Functionally, catalyzes the methylthiolation of N6-(dimethylallyl)adenosine (i(6)A), leading to the formation of 2-methylthio-N6-(dimethylallyl)adenosine (ms(2)i(6)A) at position 37 in tRNAs that read codons beginning with uridine. The sequence is that of tRNA-2-methylthio-N(6)-dimethylallyladenosine synthase from Mycolicibacterium gilvum (strain PYR-GCK) (Mycobacterium gilvum (strain PYR-GCK)).